Here is a 174-residue protein sequence, read N- to C-terminus: Shikimate kinase 2 (174 aa).

ATP is bound at residue 12–17; the sequence is GCGKTT. Mg(2+)-binding residues include threonine 16 and aspartate 32. Aspartate 34, arginine 58, and glycine 79 together coordinate substrate. The LID domain stretch occupies residues 112–126; it reads QAAPEEDLRPTLTGK. Position 120 (arginine 120) interacts with ATP. Arginine 139 serves as a coordination point for substrate.

Belongs to the shikimate kinase family. AroL subfamily. In terms of assembly, monomer. Mg(2+) serves as cofactor.

It is found in the cytoplasm. The catalysed reaction is shikimate + ATP = 3-phosphoshikimate + ADP + H(+). It functions in the pathway metabolic intermediate biosynthesis; chorismate biosynthesis; chorismate from D-erythrose 4-phosphate and phosphoenolpyruvate: step 5/7. Catalyzes the specific phosphorylation of the 3-hydroxyl group of shikimic acid using ATP as a cosubstrate. This is Shikimate kinase 2 from Shigella boydii serotype 18 (strain CDC 3083-94 / BS512).